The chain runs to 209 residues: Small ribosomal subunit protein uS4 (209 aa).

A disordered region spans residues 23–46; it reads SRNPLLKKPHPPGQHGMQRKKKSD. One can recognise an S4 RNA-binding domain in the interval 93-153; it reads CRLDNMVYRM…EKSKRLQSVK (61 aa).

Belongs to the universal ribosomal protein uS4 family. In terms of assembly, part of the 30S ribosomal subunit. Contacts protein S5. The interaction surface between S4 and S5 is involved in control of translational fidelity.

Functionally, one of the primary rRNA binding proteins, it binds directly to 16S rRNA where it nucleates assembly of the body of the 30S subunit. Its function is as follows. With S5 and S12 plays an important role in translational accuracy. This is Small ribosomal subunit protein uS4 from Chlamydia pneumoniae (Chlamydophila pneumoniae).